The chain runs to 277 residues: Endochitinase CHI (277 aa).

Residues methionine 1 to serine 31 form the signal peptide. Residues glutamine 32–serine 66 enclose the Chitin-binding type-1 domain. 4 cysteine pairs are disulfide-bonded: cysteine 34/cysteine 42, cysteine 36/cysteine 48, cysteine 41/cysteine 55, and cysteine 59/cysteine 64. The segment at valine 75–cysteine 277 is catalytic. Glutamate 136 (proton donor) is an active-site residue. N-linked (GlcNAc...) asparagine glycosylation occurs at asparagine 274.

It belongs to the glycosyl hydrolase 19 family. Chitinase class I subfamily.

It carries out the reaction Random endo-hydrolysis of N-acetyl-beta-D-glucosaminide (1-&gt;4)-beta-linkages in chitin and chitodextrins.. The chain is Endochitinase CHI from Arabidopsis thaliana (Mouse-ear cress).